Consider the following 580-residue polypeptide: Phosphomethylpyrimidine synthase (580 aa).

Residues 1–58 (MTPTQNEIHPKHSYSPIRKHGLEVPETEIALDDSPSGPNEPFRIYRTRGPETDPTLGL) are disordered. Substrate-binding positions include asparagine 180, methionine 209, tyrosine 238, histidine 274, 294–296 (SRG), 335–338 (DGLR), and glutamate 374. Histidine 378 is a Zn(2+) binding site. Position 401 (tyrosine 401) interacts with substrate. Histidine 442 is a Zn(2+) binding site. [4Fe-4S] cluster contacts are provided by cysteine 522, cysteine 525, and cysteine 530. The interval 554 to 580 (VGASDSTEGMKEKSREFVAGGGEVYRE) is disordered.

This sequence belongs to the ThiC family. It depends on [4Fe-4S] cluster as a cofactor.

It catalyses the reaction 5-amino-1-(5-phospho-beta-D-ribosyl)imidazole + S-adenosyl-L-methionine = 4-amino-2-methyl-5-(phosphooxymethyl)pyrimidine + CO + 5'-deoxyadenosine + formate + L-methionine + 3 H(+). The protein operates within cofactor biosynthesis; thiamine diphosphate biosynthesis. Catalyzes the synthesis of the hydroxymethylpyrimidine phosphate (HMP-P) moiety of thiamine from aminoimidazole ribotide (AIR) in a radical S-adenosyl-L-methionine (SAM)-dependent reaction. This chain is Phosphomethylpyrimidine synthase, found in Corynebacterium efficiens (strain DSM 44549 / YS-314 / AJ 12310 / JCM 11189 / NBRC 100395).